A 403-amino-acid chain; its full sequence is MEEDRGSALAAESALEKNVAELTVMDVYDIASLVGHEFERVIDQHGCEAIARLIPKVVRVLEILEVLVSRHHVAPELDELRLELDRLRLERMDRIEKERKHQKELELVEDVWRGEAQDLLSQIAQLQEENKQLMTNLSHKDVSFSEEEFQKHEGMSERERQVMKKLKEVVDKQRDEIRAKDRELGLKNEDVEALQQQQTRLMKINHDLRHRVTVVEAQGKALIEQKVELEADLQTKEQEMGSLRAELGKLRERLQGELNQNGEEEPVAELGGEECVSEAEKVAMDLKDPNRPRFTLQELRDVLHERNELKSKVFLLQEELAYYKSEEIEEENQIPQPPPIAHPRMSPQPESGIKRLFSFFSRDKKRLANTQRNVRIHETFGQWANCHRDDGYTEQGQEALQHL.

A Phosphoserine modification is found at serine 7. An RH1 domain is found at 10-97; the sequence is AAESALEKNV…RLERMDRIEK (88 aa). Position 47 is an S-nitrosocysteine (cysteine 47). A coiled-coil region spans residues 76–265; the sequence is ELDELRLELD…GELNQNGEEE (190 aa). Residues 291 to 356 enclose the RH2 domain; sequence RPRFTLQELR…PQPESGIKRL (66 aa). The disordered stretch occupies residues 329-348; it reads EEENQIPQPPPIAHPRMSPQ.

This sequence belongs to the RILPL family. In terms of assembly, interacts (when S-nitrosylated) with GAPDH. Interacts with RAB8A; interaction is dependent on the phosphorylation of 'Thr-72' of RAB8A. Interacts with RAB10 and RAB12; the interaction is dependent on the phosphorylation of 'Thr-73' of RAB10, and 'Ser-105' of RAB12. Post-translationally, S-nitrosylation is required for the interaction with GAPDH.

The protein resides in the cytoplasm. Its subcellular location is the cytosol. The protein localises to the cytoskeleton. It is found in the microtubule organizing center. It localises to the centrosome. The protein resides in the centriole. Its subcellular location is the cilium basal body. Its function is as follows. Plays a role in the regulation of cell shape and polarity. Plays a role in cellular protein transport, including protein transport away from primary cilia. Neuroprotective protein, which acts by sequestring GAPDH in the cytosol and prevent the apoptotic function of GAPDH in the nucleus. Competes with SIAH1 for binding GAPDH. Does not regulate lysosomal morphology and distribution. Binds to RAB10 following LRRK2-mediated RAB10 phosphorylation which leads to inhibition of ciliogenesis. In Bos taurus (Bovine), this protein is RILP-like protein 1 (RILPL1).